We begin with the raw amino-acid sequence, 177 residues long: Mitochondrial inner membrane protease subunit 2 (177 aa).

A helical membrane pass occupies residues 19–37 (FFVAVPVAVTFLDRVACVA). Catalysis depends on residues S43 and K91.

Belongs to the peptidase S26 family. IMP2 subfamily. As to quaternary structure, heterodimer of 2 subunits, IMMPL1 and IMMPL2.

Its subcellular location is the mitochondrion inner membrane. Its function is as follows. Catalyzes the removal of transit peptides required for the targeting of proteins from the mitochondrial matrix, across the inner membrane, into the inter-membrane space. Known to process the nuclear encoded protein DIABLO. The chain is Mitochondrial inner membrane protease subunit 2 (IMMP2L) from Bos taurus (Bovine).